The sequence spans 376 residues: RING-H2 finger protein ATL46 (376 aa).

The helical transmembrane segment at Val45–Leu65 threads the bilayer. An RING-type; atypical zinc finger spans residues Cys143 to Arg185. Basic and acidic residues-rich tracts occupy residues Arg296 to Glu305 and Asp358 to Arg376. Disordered regions lie at residues Arg296–Thr320 and Phe341–Arg376.

Belongs to the RING-type zinc finger family. ATL subfamily.

The protein resides in the membrane. It carries out the reaction S-ubiquitinyl-[E2 ubiquitin-conjugating enzyme]-L-cysteine + [acceptor protein]-L-lysine = [E2 ubiquitin-conjugating enzyme]-L-cysteine + N(6)-ubiquitinyl-[acceptor protein]-L-lysine.. It functions in the pathway protein modification; protein ubiquitination. The polypeptide is RING-H2 finger protein ATL46 (ATL46) (Arabidopsis thaliana (Mouse-ear cress)).